The sequence spans 433 residues: F-box only protein 15 (433 aa).

An F-box domain is found at 1 to 41; it reads MPSEILVKILSYLDAVTLVCIGCVSRRFYHLADDNLIWVRK.

As to quaternary structure, directly interacts with SKP1 and CUL1. In terms of tissue distribution, expressed in testis.

Substrate-recognition component of the SCF (SKP1-CUL1-F-box protein)-type E3 ubiquitin ligase complex. This chain is F-box only protein 15 (Fbxo15), found in Mus musculus (Mouse).